Here is a 521-residue protein sequence, read N- to C-terminus: Medium/long-chain-fatty-acid--[acyl-carrier-protein] ligase MbtM (521 aa).

The protein belongs to the ATP-dependent AMP-binding enzyme family.

The catalysed reaction is a long-chain fatty acid + holo-[ACP] + ATP = a long-chain fatty acyl-[ACP] + AMP + diphosphate. The enzyme catalyses a medium-chain fatty acid + holo-[ACP] + ATP = a medium-chain fatty acyl-[ACP] + AMP + diphosphate. Its pathway is siderophore biosynthesis; mycobactin biosynthesis. Functionally, activates lipidic moieties required for mycobactin biosynthesis. Converts medium- to long-chain aliphatic fatty acids into acyl adenylate, which is further transferred on to the phosphopantetheine arm of the carrier protein MbtL. This chain is Medium/long-chain-fatty-acid--[acyl-carrier-protein] ligase MbtM (mbtM), found in Mycobacterium bovis (strain ATCC BAA-935 / AF2122/97).